Here is a 72-residue protein sequence, read N- to C-terminus: Translation initiation factor IF-1 (72 aa).

An S1-like domain is found at M1–R72.

This sequence belongs to the IF-1 family. As to quaternary structure, component of the 30S ribosomal translation pre-initiation complex which assembles on the 30S ribosome in the order IF-2 and IF-3, IF-1 and N-formylmethionyl-tRNA(fMet); mRNA recruitment can occur at any time during PIC assembly.

It is found in the cytoplasm. In terms of biological role, one of the essential components for the initiation of protein synthesis. Stabilizes the binding of IF-2 and IF-3 on the 30S subunit to which N-formylmethionyl-tRNA(fMet) subsequently binds. Helps modulate mRNA selection, yielding the 30S pre-initiation complex (PIC). Upon addition of the 50S ribosomal subunit IF-1, IF-2 and IF-3 are released leaving the mature 70S translation initiation complex. This Actinobacillus pleuropneumoniae serotype 5b (strain L20) protein is Translation initiation factor IF-1.